Here is a 524-residue protein sequence, read N- to C-terminus: MASRDLAESLLPVGGGAATATATATAHDEYDERAYDSDDKVSIAVSDSDSEDGGGGGGDAMRPAFSWRKLWRFTGPGFLMCIAFLDPGNLEGDLQAGAAAGYQLLWLLLWATVMGALVQLLSARLGVATGKHLAELCREEYPPWATRALWAMTELALVGADIQEVIGSAIAIKILSAGTVPLWGGVVITAFDCFIFLFLENYGVRKLEAFFGVLIAVMAVSFAIMFGETKPSGKELLIGLVVPKLSSRTIKQAVGIVGCIIMPHNVFLHSALVQSRKIDTNKKSRVQEAVFYYNIESILALIVSFFINICVTTVFAKGFYGSEQADGIGLENAGQYLQQKYGTAFFPILYIWAIGLLASGQSSTITGTYAGQFVMGGFLNLRLKKWLRAMITRSFAIIPTMIVALFFDTEDPTMDILNEALNVLQSIQIPFALIPLITLVSKEQVMGSFVVGPITKVISWIVTVFLMLINGYLILSFYATEVRGALVRSSLCVVLAVYLAFIVYLIMRNTSLYSRLRSAMTKST.

Positions 34 to 58 (AYDSDDKVSIAVSDSDSEDGGGGGG) are disordered. 12 helical membrane passes run 70 to 90 (LWRF…PGNL), 98 to 118 (AAAG…GALV), 155 to 175 (LALV…IKIL), 179 to 199 (TVPL…FLFL), 207 to 227 (LEAF…IMFG), 253 to 273 (AVGI…SALV), 295 to 315 (IESI…TTVF), 341 to 361 (YGTA…ASGQ), 389 to 409 (AMIT…FFDT), 420 to 440 (ALNV…ITLV), 457 to 477 (VISW…ILSF), and 486 to 506 (LVRS…VYLI).

The protein belongs to the NRAMP (TC 2.A.55) family.

The protein resides in the membrane. Probable metal transporter. The chain is Metal transporter Nramp2 (NRAMP2) from Oryza sativa subsp. japonica (Rice).